The sequence spans 317 residues: Pantothenate kinase (317 aa).

ATP is bound at residue 99–106; that stretch reads GSVSVGKS.

This sequence belongs to the prokaryotic pantothenate kinase family.

It localises to the cytoplasm. It carries out the reaction (R)-pantothenate + ATP = (R)-4'-phosphopantothenate + ADP + H(+). Its pathway is cofactor biosynthesis; coenzyme A biosynthesis; CoA from (R)-pantothenate: step 1/5. This is Pantothenate kinase from Histophilus somni (strain 129Pt) (Haemophilus somnus).